Here is a 115-residue protein sequence, read N- to C-terminus: Pycsar effector protein TpPycTM (115 aa).

2 helical membrane-spanning segments follow: residues 44 to 64 and 74 to 94; these read IGNLLLIDTITVGIFITYATN and VWNILLFITGLIFTVSSVILV.

The protein localises to the cell inner membrane. In terms of biological role, pycsar (pyrimidine cyclase system for antiphage resistance) provides immunity against bacteriophage. The pyrimidine cyclase (PycC) synthesizes cyclic nucleotides in response to infection; these serve as specific second messenger signals. The signals activate the adjacent effector, leading to bacterial cell death and abortive phage infection. A clade C Pycsar system. Its function is as follows. The effector gene of a two-gene Pycsar system. Expression of this and adjacent uridylate cyclase TpPycC (AC A0A1T4LJ54) probably confers resistance to bacteriophage. The genes are probably only expressed in response to bacteriophage infection. Probably only responds to cUMP (produced by its cognate NTP cyclase), acts by impairing membrane integrity. The polypeptide is Pycsar effector protein TpPycTM (Treponema porcinum).